A 284-amino-acid polypeptide reads, in one-letter code: Anaerobic dimethyl sulfoxide reductase chain YnfH (284 aa).

At 1-9 the chain is on the periplasmic side; it reads MGNGWHEWP. The helical transmembrane segment at 10–30 threads the bilayer; that stretch reads LVIFTVLGQCVVGALIVSGIG. Topologically, residues 31–45 are cytoplasmic; that stretch reads WFAAKNDADRQRIVR. The chain crosses the membrane as a helical span at residues 46–66; that stretch reads GMFFLWLLMGVGFIASVMHLG. Residues 67–86 lie on the Periplasmic side of the membrane; that stretch reads SPLRAFNSLNRIGASGLSNE. Residues 87-107 traverse the membrane as a helical segment; sequence IAAGSIFFAVGGLWWLVAVIG. Residues 108 to 115 are Cytoplasmic-facing; that stretch reads KMPQALGK. Residues 116–136 form a helical membrane-spanning segment; sequence LWLLFSMALGVIFVWMMTCVY. The Periplasmic portion of the chain corresponds to 137 to 148; that stretch reads QIDTVPTWHNGY. A helical transmembrane segment spans residues 149-169; sequence TTLAFFLTVLLSGPILAAAIL. Residues 170-180 lie on the Cytoplasmic side of the membrane; the sequence is RAARVTFNTTP. A helical membrane pass occupies residues 181–201; that stretch reads FAIISVLALIACAGVIVLQGL. At 202 to 222 the chain is on the periplasmic side; the sequence is SLASIHSSVQQASALVPDYAS. A helical transmembrane segment spans residues 223–243; that stretch reads LQVWRVVLLCAGLGCWLCPLI. At 244–250 the chain is on the cytoplasmic side; sequence RRREPHV. Residues 251–271 form a helical membrane-spanning segment; it reads AGLILGLILILGGEMIGRVLF. The Periplasmic portion of the chain corresponds to 272–284; the sequence is YGLHMTVGMAIAG.

This sequence belongs to the DmsC family. The complex consists of three subunits: YnfF, the reductase; YnfG, an electron transfer protein, and YnfH, a membrane anchor protein.

It localises to the cell inner membrane. In terms of biological role, terminal reductase during anaerobic growth on various sulfoxide and N-oxide compounds. The C subunit anchors the other two subunits to the membrane and stabilize the catalytic subunits. The chain is Anaerobic dimethyl sulfoxide reductase chain YnfH (ynfH) from Escherichia coli (strain K12).